The following is a 311-amino-acid chain: Glycosyltransferase 6 domain-containing protein 1 (311 aa).

At 1–5 (MKAKR) the chain is on the cytoplasmic side. A helical; Signal-anchor for type II membrane protein transmembrane segment spans residues 6–26 (RILLQLLTFCLFLLLLAKIHF). Residues 27 to 311 (RNHQEEELLL…KIAHHPIDTL (285 aa)) are Lumenal-facing. Asn-77 carries N-linked (GlcNAc...) asparagine glycosylation. Substrate-binding positions include 85-90 (FAVGSL), 176-178 (NIN), and 198-201 (HPWW). Catalysis depends on Glu-266, which acts as the Nucleophile.

It belongs to the glycosyltransferase 6 family. It depends on Mn(2+) as a cofactor.

It is found in the membrane. The polypeptide is Glycosyltransferase 6 domain-containing protein 1 (Glt6d1) (Mus musculus (Mouse)).